Here is a 278-residue protein sequence, read N- to C-terminus: 2-dehydro-3-deoxyphosphooctonate aldolase (278 aa).

This sequence belongs to the KdsA family.

It is found in the cytoplasm. The catalysed reaction is D-arabinose 5-phosphate + phosphoenolpyruvate + H2O = 3-deoxy-alpha-D-manno-2-octulosonate-8-phosphate + phosphate. The protein operates within carbohydrate biosynthesis; 3-deoxy-D-manno-octulosonate biosynthesis; 3-deoxy-D-manno-octulosonate from D-ribulose 5-phosphate: step 2/3. Its pathway is bacterial outer membrane biogenesis; lipopolysaccharide biosynthesis. The sequence is that of 2-dehydro-3-deoxyphosphooctonate aldolase from Bartonella tribocorum (strain CIP 105476 / IBS 506).